We begin with the raw amino-acid sequence, 386 residues long: Succinate--CoA ligase [ADP-forming] subunit beta (386 aa).

Positions 9–244 constitute an ATP-grasp domain; that stretch reads KALFREHGIP…ETQEDAREAR (236 aa). ATP is bound by residues Lys-46, 53–55, Glu-99, Thr-102, and Glu-107; that span reads GRG. 2 residues coordinate Mg(2+): Asn-199 and Asp-213. Residues Asn-264 and 321-323 contribute to the substrate site; that span reads GIV.

It belongs to the succinate/malate CoA ligase beta subunit family. As to quaternary structure, heterotetramer of two alpha and two beta subunits. Requires Mg(2+) as cofactor.

It catalyses the reaction succinate + ATP + CoA = succinyl-CoA + ADP + phosphate. It carries out the reaction GTP + succinate + CoA = succinyl-CoA + GDP + phosphate. It participates in carbohydrate metabolism; tricarboxylic acid cycle; succinate from succinyl-CoA (ligase route): step 1/1. Succinyl-CoA synthetase functions in the citric acid cycle (TCA), coupling the hydrolysis of succinyl-CoA to the synthesis of either ATP or GTP and thus represents the only step of substrate-level phosphorylation in the TCA. The beta subunit provides nucleotide specificity of the enzyme and binds the substrate succinate, while the binding sites for coenzyme A and phosphate are found in the alpha subunit. This Thioalkalivibrio sulfidiphilus (strain HL-EbGR7) protein is Succinate--CoA ligase [ADP-forming] subunit beta.